The chain runs to 357 residues: Serine proteinase inhibitor 1 (357 aa).

The protein belongs to the serpin family. Poxviruses subfamily.

The protein localises to the host cytoplasm. In terms of biological role, plays a role in mediating viral host range. May act to inhibit a caspase independent form of apoptosis to allow efficient virus replication in infected cells. The protein is Serine proteinase inhibitor 1 (OPG208) of Monkeypox virus.